A 373-amino-acid chain; its full sequence is 4-hydroxy-3-methylbut-2-en-1-yl diphosphate synthase (flavodoxin) (373 aa).

[4Fe-4S] cluster is bound by residues Cys-270, Cys-273, Cys-305, and Glu-312.

The protein belongs to the IspG family. Requires [4Fe-4S] cluster as cofactor.

The enzyme catalyses (2E)-4-hydroxy-3-methylbut-2-enyl diphosphate + oxidized [flavodoxin] + H2O + 2 H(+) = 2-C-methyl-D-erythritol 2,4-cyclic diphosphate + reduced [flavodoxin]. It participates in isoprenoid biosynthesis; isopentenyl diphosphate biosynthesis via DXP pathway; isopentenyl diphosphate from 1-deoxy-D-xylulose 5-phosphate: step 5/6. Its function is as follows. Converts 2C-methyl-D-erythritol 2,4-cyclodiphosphate (ME-2,4cPP) into 1-hydroxy-2-methyl-2-(E)-butenyl 4-diphosphate. The sequence is that of 4-hydroxy-3-methylbut-2-en-1-yl diphosphate synthase (flavodoxin) from Klebsiella pneumoniae (strain 342).